The chain runs to 1394 residues: Ninein-like protein (1394 aa).

EF-hand domains are found at residues 8–43 and 42–77; these read HYVS…LGLE and LEEQ…VLSS. Disordered regions lie at residues 77–99 and 126–166; these read SGSG…SCAV and KYGS…KEPQ. Serine 149 carries the phosphoserine modification. Basic and acidic residues predominate over residues 151–166; it reads ESLKSDEDAESAKEPQ. EF-hand domains follow at residues 197 to 232 and 234 to 269; these read TPEN…IGLH and LEKQ…HEPP. The Ca(2+) site is built by aspartate 247, aspartate 249, aspartate 251, arginine 253, and glutamate 258. Coiled-coil stretches lie at residues 382–423, 461–515, and 544–584; these read RQEL…MDDC, WEQA…DSEK, and EQFT…SRQS. The KEN box motif lies at 494–496; the sequence is KEN. Residues 578-602 form a disordered region; that stretch reads LPRSRQSPAGTPGTHRRRIPGRGPA. The D-box signature appears at 632 to 640; sequence RMQLETKVN. Residues 835-863 adopt a coiled-coil conformation; that stretch reads EKEKLEQTYREQVEGLVQEADVLRALLKN. The segment covering 866 to 893 has biased composition (polar residues); it reads TVVSDQQERTPSSMSLGPDSRQQPTARQ. Residues 866–977 form a disordered region; sequence TVVSDQQERT…SARTLTGQGQ (112 aa). The segment covering 939-951 has biased composition (basic and acidic residues); the sequence is RSSENLGVRDNHQ. Coiled-coil stretches lie at residues 1057–1229 and 1269–1331; these read SESE…ELTE and GARV…LRKQ.

In terms of assembly, interacts with gamma-tubulin and TUBGCP4. Interacts with anaphase promoting complex/cyclosome (APC/C). Interacts with CDC20 and FZR1. Interacts with LCA5 and USH2A. Phosphorylated by PLK1 which disrupts its centrosome association and interaction with gamma-tubulin. In terms of processing, ubiquitinated by the APC/C complex leading to its degradation.

Its subcellular location is the cytoplasm. It is found in the cytoskeleton. The protein resides in the microtubule organizing center. It localises to the centrosome. Functionally, involved in the microtubule organization in interphase cells. Overexpression induces the fragmentation of the Golgi, and causes lysosomes to disperse toward the cell periphery; it also interferes with mitotic spindle assembly. Involved in vesicle transport in photoreceptor cells. The protein is Ninein-like protein (Ninl) of Mus musculus (Mouse).